Consider the following 593-residue polypeptide: Kelch-like protein 2 (593 aa).

The segment at 1 to 29 (METPPLPPACTKQGHQKPLDSKDENPEKH) is disordered. Over residues 17-29 (KPLDSKDENPEKH) the composition is skewed to basic and acidic residues. Positions 56 to 123 (CDVTIVAEDM…VYTAEIQVTE (68 aa)) constitute a BTB domain. 6 Kelch repeats span residues 308-353 (LMVV…YMAG), 354-400 (LVFA…VLNG), 402-447 (LYAV…VVGG), 449-496 (LYAV…VLNN), 497-543 (LLYA…AVNG), and 545-591 (LYVV…VIDK).

Component of the BCR(KLHL2) E3 ubiquitin ligase complex, at least composed of CUL3 and KLHL2 and RBX1. Binds actin. Interacts with KLHL12. Interacts (via N-terminus) with FYN (via SH3 domain).

Its subcellular location is the cytoplasm. The protein localises to the cytoskeleton. The protein resides in the cell projection. It localises to the ruffle. It is found in the lamellipodium. Its subcellular location is the cytosol. Its pathway is protein modification; protein ubiquitination. Functionally, substrate-specific adapter of a BCR (BTB-CUL3-RBX1) E3 ubiquitin ligase complex that mediates the ubiquitination of target proteins, such as NPTXR, WNK1, WNK3 and WNK4, leading most often to their proteasomal degradation. The BCR(KLHL2) complex catalyzes ubiquitination and degradation of NPTXR. Responsible for degradative ubiquitination of the WNK kinases WNK1, WNK3 and WNK4. Plays a role in the reorganization of the actin cytoskeleton. Promotes growth of cell projections in oligodendrocyte precursors. This chain is Kelch-like protein 2, found in Mus musculus (Mouse).